A 170-amino-acid polypeptide reads, in one-letter code: MELKNLIREIPNFPKSGIIFRDITTLLSNTDGLHYTIDILTEKCLEFKPDYVVGIESRGFIFGMPLAYQLNVGFIPVRKPGKLPAEVYSVSYDLEYGQDSLEVHQDAMPAGSRVLVIDDLLATGGTAGATTQLIEKAKCNLVGFAFVIELKELGGREKLPKVPIISLIEY.

This sequence belongs to the purine/pyrimidine phosphoribosyltransferase family. In terms of assembly, homodimer.

Its subcellular location is the cytoplasm. The catalysed reaction is AMP + diphosphate = 5-phospho-alpha-D-ribose 1-diphosphate + adenine. The protein operates within purine metabolism; AMP biosynthesis via salvage pathway; AMP from adenine: step 1/1. Functionally, catalyzes a salvage reaction resulting in the formation of AMP, that is energically less costly than de novo synthesis. The protein is Adenine phosphoribosyltransferase of Trichodesmium erythraeum (strain IMS101).